The primary structure comprises 284 residues: Putative transcription factor kapC (284 aa).

The segment covering Met1–His10 has biased composition (pro residues). The tract at residues Met1 to Gln121 is disordered. Over residues His26–Gln40 the composition is skewed to low complexity. Positions Gln41 to Met54 are enriched in pro residues. A compositionally biased stretch (polar residues) spans Asn57–Ile67. The region spanning Pro102–Leu165 is the bZIP domain. Residues Leu103 to Tyr126 form a basic motif region. Residues Arg108–Ala118 show a composition bias toward low complexity. The tract at residues Leu130 to Leu161 is leucine-zipper. The interval Glu174–Ser284 is disordered. Low complexity predominate over residues Pro193–Ser222.

It belongs to the bZIP family.

It localises to the nucleus. Its function is as follows. Putative transcription factor. This is Putative transcription factor kapC (kapC) from Aspergillus oryzae (strain ATCC 42149 / RIB 40) (Yellow koji mold).